We begin with the raw amino-acid sequence, 149 residues long: Large ribosomal subunit protein bL9 (149 aa).

The protein belongs to the bacterial ribosomal protein bL9 family.

Binds to the 23S rRNA. This chain is Large ribosomal subunit protein bL9, found in Bacillus pumilus (strain SAFR-032).